The primary structure comprises 398 residues: Interleukin-1 receptor type 2 (398 aa).

Residues 1-13 form the signal peptide; it reads MLRLYVLVMGVSA. The Extracellular portion of the chain corresponds to 14-343; sequence FTLQPAAHTG…FQTLRTTVKE (330 aa). 3 consecutive Ig-like C2-type domains span residues 18–124, 134–223, and 237–349; these read PAAH…IELR, PFIS…ITRS, and PVII…STFS. 3 disulfides stabilise this stretch: Cys28-Cys116, Cys50-Cys108, and Cys152-Cys207. Asn66, Asn72, and Asn112 each carry an N-linked (GlcNAc...) asparagine glycan. 2 N-linked (GlcNAc...) asparagine glycosylation sites follow: Asn219 and Asn277. A disulfide bridge connects residues Cys258 and Cys326. Residues 329–343 are contains proteolytic cleavage site; the sequence is HNTLSFQTLRTTVKE. A helical transmembrane segment spans residues 344-369; sequence ASSTFSWGIVLAPLSLAFLVLGGIWM. The Cytoplasmic segment spans residues 370 to 398; it reads HRRCKHRTGKADGLTVLWPHHQDFQSYPK.

Belongs to the interleukin-1 receptor family. Associates with IL1RAP to form a non-signaling interleukin-1 receptor complex. A soluble form (sIL1R2) can also be produced by proteolytic cleavage at the cell surface (shedding) involving a metalloproteinase; hovever, several sIL1R2 forms ranging from 45 and 60 kDa are reported.

Its subcellular location is the secreted. The protein localises to the cell membrane. Functionally, non-signaling receptor for IL1A, IL1B and IL1RN. Reduces IL1B activities. Serves as a decoy receptor by competitive binding to IL1B and preventing its binding to IL1R1. Also modulates cellular response through non-signaling association with IL1RAP after binding to IL1B. IL1R2 (membrane and secreted forms) preferentially binds IL1B and poorly IL1A and IL1RN. The secreted IL1R2 recruits secreted IL1RAP with high affinity; this complex formation may be the dominant mechanism for neutralization of IL1B by secreted/soluble receptors. This Homo sapiens (Human) protein is Interleukin-1 receptor type 2 (IL1R2).